A 275-amino-acid polypeptide reads, in one-letter code: Formamidopyrimidine-DNA glycosylase (275 aa).

Proline 2 serves as the catalytic Schiff-base intermediate with DNA. The Proton donor role is filled by glutamate 3. Lysine 58 acts as the Proton donor; for beta-elimination activity in catalysis. Histidine 93, arginine 111, and arginine 156 together coordinate DNA. The FPG-type zinc finger occupies 241–275 (FVYDRAGQPCRVCGTPIRQIVQGQRSTYYCPTCQR). The active-site Proton donor; for delta-elimination activity is arginine 265.

It belongs to the FPG family. In terms of assembly, monomer. Zn(2+) serves as cofactor.

The catalysed reaction is Hydrolysis of DNA containing ring-opened 7-methylguanine residues, releasing 2,6-diamino-4-hydroxy-5-(N-methyl)formamidopyrimidine.. The enzyme catalyses 2'-deoxyribonucleotide-(2'-deoxyribose 5'-phosphate)-2'-deoxyribonucleotide-DNA = a 3'-end 2'-deoxyribonucleotide-(2,3-dehydro-2,3-deoxyribose 5'-phosphate)-DNA + a 5'-end 5'-phospho-2'-deoxyribonucleoside-DNA + H(+). In terms of biological role, involved in base excision repair of DNA damaged by oxidation or by mutagenic agents. Acts as a DNA glycosylase that recognizes and removes damaged bases. Has a preference for oxidized purines, such as 7,8-dihydro-8-oxoguanine (8-oxoG). Has AP (apurinic/apyrimidinic) lyase activity and introduces nicks in the DNA strand. Cleaves the DNA backbone by beta-delta elimination to generate a single-strand break at the site of the removed base with both 3'- and 5'-phosphates. The sequence is that of Formamidopyrimidine-DNA glycosylase from Burkholderia cenocepacia (strain ATCC BAA-245 / DSM 16553 / LMG 16656 / NCTC 13227 / J2315 / CF5610) (Burkholderia cepacia (strain J2315)).